A 1201-amino-acid polypeptide reads, in one-letter code: Potassium/sodium hyperpolarization-activated cyclic nucleotide-gated channel 4 (1201 aa).

At 1-263 (MDKLPPSMRK…IIHPYSDFRF (263 aa)) the chain is on the cytoplasmic side. Residues 24–183 (WIMDEEEDGE…PASASCEQPS (160 aa)) form a disordered region. The span at 26–36 (MDEEEDGEEEG) shows a compositional bias: acidic residues. A compositionally biased stretch (gly residues) spans 105-118 (SRGGGSGGAGGGSS). Positions 121–132 (HLHDSAEERRLI) are enriched in basic and acidic residues. S139 carries the phosphoserine modification. Positions 164 to 174 (ASPPPQQPPQP) are enriched in pro residues. Residues 209 to 260 (GQSGFMQRQFGAMLQPGVNKFSLRMFGSQKAVEREQERVKSAGFWIIHPYSD) are involved in subunit assembly. The helical transmembrane segment at 264 to 286 (YWDLTMLLLMVGNLIIIPVGITF) threads the bilayer. At 287 to 293 (FKDENTT) the chain is on the extracellular side. Residues 294–314 (PWIVFNVVSDTFFLIDLVLNF) traverse the membrane as a helical segment. The Cytoplasmic segment spans residues 315–336 (RTGIVVEDNTEIILDPQRIKMK). The chain crosses the membrane as a helical span at residues 337–359 (YLKSWFVVDFISSIPVDYIFLIV). At 360 to 378 (ETRIDSEVYKTARALRIVR) the chain is on the extracellular side. The chain crosses the membrane as a helical; Voltage-sensor span at residues 379 to 399 (FTKILSLLRLLRLSRLIRYIH). At 400 to 413 (QWEEIFHMTYDLAS) the chain is on the cytoplasmic side. The helical transmembrane segment at 414 to 436 (AVVRIVNLIGMMLLLCHWDGCLQ) threads the bilayer. Residues 437 to 464 (FLVPMLQDFPHDCWVSINGMVNNSWGKQ) are Extracellular-facing. N458 carries an N-linked (GlcNAc...) asparagine glycan. Positions 465–486 (YSYALFKAMSHMLCIGYGRQAP) form an intramembrane region, pore-forming. Residues 487–491 (VGMSD) lie on the Extracellular side of the membrane. A helical membrane pass occupies residues 492–517 (VWLTMLSMIVGATCYAMFIGHATALI). The Cytoplasmic portion of the chain corresponds to 518–1201 (QSLDSSRRQY…PVRSKLPSNL (684 aa)). 3',5'-cyclic GMP is bound by residues Y559, K562, F564, and E566. 3',5'-cyclic AMP is bound by residues G659, E660, C662, R669, T670, V673, and R710. Disordered stretches follow at residues 804 to 902 (AIFR…TAAA) and 914 to 1201 (ALGG…PSNL). Low complexity-rich tracts occupy residues 831–856 (SLIPSALGSASPASSPSQVDTPSSSS) and 866–880 (SAPPGLSPLLPSSSS). Pro residues predominate over residues 881-894 (SPPPGACGSPPAPT). Low complexity-rich tracts occupy residues 915 to 939 (LGGSLSSSDSPLLTPLQPGARSPQA) and 967 to 995 (RSPSSSPGQLGQPPGELSLGLAAGPSSTP). A compositionally biased stretch (pro residues) spans 1029 to 1042 (GHSPGPPRTFPSAP). A compositionally biased stretch (low complexity) spans 1045 to 1056 (ASGSHGSLLLPP). Phosphoserine is present on residues S1105 and S1108. Positions 1122-1134 (AGGGSGSSGGLGP) are enriched in gly residues.

The protein belongs to the potassium channel HCN family. Homotetramer. The potassium channel is composed of a homo- or heterotetrameric complex of pore-forming subunits. Interacts with PEX5L with a 4:4 HCN4:PEX5L stoichiometry; reduces the effects of cAMP on the voltage-dependence and rate of activation. Interacts with IRAG1; regulates HCN4 channel activity. Interacts with IRAG2; regulates HCN4 channel activity. Post-translationally, S-palmitoylated. In terms of tissue distribution, detected in a subset of elongated cells in taste buds.

It localises to the cell membrane. It carries out the reaction K(+)(in) = K(+)(out). It catalyses the reaction Na(+)(in) = Na(+)(out). Its activity is regulated as follows. Activated by cAMP, and to a lesser extent by cGMP and cCMP. cAMP binding causes a conformation change that leads to the assembly of an active tetramer and channel opening. Binding of cAMP removes a tonic inhibition conferred by cyclic nucleotide-binding domain (CNBD) on channel opening. Cyclic dinucleotides can modulate HCN4 channel; cyclic dinucleotides acting as potent antagonists of cAMP. Inhibited by extracellular Cs(+) ions. Auxiliary subunits can also regulate HCN4 channel. IRAG1 causes a gain-of-function by shifting HCN4 activation to more depolarized membrane potentials in the absence of cAMP. In contrast, IRAG2 causes a loss-of-function by inhibiting cAMP-dependent potentiation of HCN4 activation. Its function is as follows. Hyperpolarization-activated ion channel that are permeable to Na(+) and K(+) ions with very slow activation and inactivation. Exhibits higher selectivity for K(+) over Na(+) ions. Contributes to the native pacemaker currents in heart (If) that regulate the rhythm of heart beat. Contributes to the native pacemaker currents in neurons (Ih). May mediate responses to sour stimuli. This chain is Potassium/sodium hyperpolarization-activated cyclic nucleotide-gated channel 4 (Hcn4), found in Mus musculus (Mouse).